A 251-amino-acid polypeptide reads, in one-letter code: Ubiquinone/menaquinone biosynthesis C-methyltransferase UbiE (251 aa).

S-adenosyl-L-methionine-binding positions include T74, D95, 123-124, and S140; that span reads NA.

The protein belongs to the class I-like SAM-binding methyltransferase superfamily. MenG/UbiE family.

The enzyme catalyses a 2-demethylmenaquinol + S-adenosyl-L-methionine = a menaquinol + S-adenosyl-L-homocysteine + H(+). It catalyses the reaction a 2-methoxy-6-(all-trans-polyprenyl)benzene-1,4-diol + S-adenosyl-L-methionine = a 5-methoxy-2-methyl-3-(all-trans-polyprenyl)benzene-1,4-diol + S-adenosyl-L-homocysteine + H(+). It functions in the pathway quinol/quinone metabolism; menaquinone biosynthesis; menaquinol from 1,4-dihydroxy-2-naphthoate: step 2/2. The protein operates within cofactor biosynthesis; ubiquinone biosynthesis. In terms of biological role, methyltransferase required for the conversion of demethylmenaquinol (DMKH2) to menaquinol (MKH2) and the conversion of 2-polyprenyl-6-methoxy-1,4-benzoquinol (DDMQH2) to 2-polyprenyl-3-methyl-6-methoxy-1,4-benzoquinol (DMQH2). In Pectobacterium carotovorum subsp. carotovorum (strain PC1), this protein is Ubiquinone/menaquinone biosynthesis C-methyltransferase UbiE.